We begin with the raw amino-acid sequence, 1167 residues long: White collar 1 protein (1167 aa).

Disordered regions lie at residues 1 to 91 (MNNN…MSGG) and 307 to 355 (STPA…GASQ). Over residues 21–57 (QHQQQQQQQQQQQQQQQQQQQQQQQQQQQQHQHQQQQ) the composition is skewed to low complexity. 2 stretches are compositionally biased toward polar residues: residues 70–91 (TPPT…MSGG) and 307–325 (STPA…TQTI). The span at 335-348 (VTNAPTPAPFTSTP) shows a compositional bias: low complexity. Residues 381–452 (KLKLGAVDMS…KREFVENNAV (72 aa)) enclose the PAS 1 domain. C428 carries the post-translational modification S-4a-FMN cysteine. The region spanning 469–508 (LINYRKGGKPFLNLLTMIPIPWDTEEIRYFIGFQIDLVEC) is the PAC 1 domain. A PAS 2 domain is found at 574 to 644 (KQSWDKMLLE…RELKEAQQHT (71 aa)). In terms of domain architecture, PAC 2 spans 650-691 (FRIRRKNSGYTWFESHGTLFNEQGKGRKCIILVGRKRPVFAL). In terms of domain architecture, PAS 3 spans 693–763 (RKDLELNGGI…RTIEKARKGK (71 aa)). Over residues 849–861 (MSKSGSSDSTGAM) the composition is skewed to low complexity. Disordered regions lie at residues 849-872 (MSKS…GPGQ), 918-952 (KKKR…PSGN), 966-1047 (QTGR…TGST), and 1060-1167 (VNAL…GLSV). The GATA-type zinc finger occupies 934-959 (CANCHTRNTPEWRRGPSGNRDLCNSC). A compositionally biased stretch (polar residues) spans 968-977 (GRVSPRTSSR). Over residues 986–995 (KKSNSPSHSS) the composition is skewed to low complexity. Residues 1004-1033 (DSPSTTTATKNSPSLRGSSTTAPGTITTDS) are compositionally biased toward polar residues. Low complexity-rich tracts occupy residues 1036–1047 (AVASSASGTGST) and 1104–1128 (QHQQ…QQHQ).

As to quaternary structure, heterodimer of wc-1 and wc-2. In terms of processing, FMN binds covalently to cysteine after exposure to blue light and is reversed in the dark.

Its subcellular location is the nucleus. In terms of biological role, may function as a transcription factor involved in light regulation. Binds and affects blue light regulation of the al-3 gene. Wc-1 and wc-2 proteins interact via homologous PAS domains, bind to promoters of light regulated genes such as frq, and activate transcription. The protein is White collar 1 protein (wc-1) of Neurospora crassa (strain ATCC 24698 / 74-OR23-1A / CBS 708.71 / DSM 1257 / FGSC 987).